The following is a 318-amino-acid chain: ADP-L-glycero-D-manno-heptose-6-epimerase (318 aa).

Residues 10-11, 31-32, K38, K53, 80-84, and N97 contribute to the NADP(+) site; these read FI, DD, and EGACS. Y144 acts as the Proton acceptor in catalysis. K148 contacts NADP(+). A substrate-binding site is contributed by N173. 2 residues coordinate NADP(+): V174 and K182. The Proton acceptor role is filled by K182. Residues K184, H191, 205–208, R218, and Y282 each bind substrate; that span reads FGAW.

It belongs to the NAD(P)-dependent epimerase/dehydratase family. HldD subfamily. In terms of assembly, homopentamer. It depends on NADP(+) as a cofactor.

It carries out the reaction ADP-D-glycero-beta-D-manno-heptose = ADP-L-glycero-beta-D-manno-heptose. The protein operates within nucleotide-sugar biosynthesis; ADP-L-glycero-beta-D-manno-heptose biosynthesis; ADP-L-glycero-beta-D-manno-heptose from D-glycero-beta-D-manno-heptose 7-phosphate: step 4/4. Functionally, catalyzes the interconversion between ADP-D-glycero-beta-D-manno-heptose and ADP-L-glycero-beta-D-manno-heptose via an epimerization at carbon 6 of the heptose. The protein is ADP-L-glycero-D-manno-heptose-6-epimerase of Chromohalobacter salexigens (strain ATCC BAA-138 / DSM 3043 / CIP 106854 / NCIMB 13768 / 1H11).